We begin with the raw amino-acid sequence, 330 residues long: Exostosin-like 2 (330 aa).

Residues 1–22 lie on the Cytoplasmic side of the membrane; that stretch reads MRCCHICKLPGRVMGIRVLRLS. Residues 23–43 traverse the membrane as a helical; Signal-anchor for type II membrane protein segment; sequence LVVILVLLLVAGALTALLPSV. At 44 to 330 the chain is on the lumenal side; sequence KEDKMLMLRR…FPYANYKRKI (287 aa). Gln-71 lines the UDP-N-acetyl-alpha-D-galactosamine pocket. UDP-N-acetyl-alpha-D-glucosamine is bound at residue Gln-71. The N-linked (GlcNAc...) asparagine glycan is linked to Asn-74. UDP-N-acetyl-alpha-D-galactosamine is bound by residues Arg-75, Asn-100, Asn-129, Arg-134, Asp-150, Asp-151, Asp-152, and Asp-244. The UDP-N-acetyl-alpha-D-glucosamine site is built by Arg-75, Asn-100, Asn-129, Arg-134, Asp-150, Asp-151, Asp-152, Asp-244, Asp-245, and Arg-293. Position 152 (Asp-152) interacts with Mn(2+). Cys-243 and Cys-296 are joined by a disulfide. Residue Asp-245 is part of the active site. Position 293 (Arg-293) interacts with UDP-N-acetyl-alpha-D-galactosamine.

Belongs to the glycosyltransferase 47 family. Mn(2+) serves as cofactor. The soluble form derives from the membrane form by proteolytic processing. As to expression, ubiquitous.

It is found in the endoplasmic reticulum membrane. The protein localises to the secreted. It carries out the reaction 3-O-(beta-D-GlcA-(1-&gt;3)-beta-D-Gal-(1-&gt;3)-beta-D-Gal-(1-&gt;4)-beta-D-Xyl)-L-seryl-[protein] + UDP-N-acetyl-alpha-D-glucosamine = 3-O-(alpha-D-GlcNAc-(1-&gt;4)-beta-D-GlcA-(1-&gt;3)-beta-D-Gal-(1-&gt;3)-beta-D-Gal-(1-&gt;4)-beta-D-Xyl)-L-seryl-[protein] + UDP + H(+). The protein operates within glycan metabolism; heparan sulfate biosynthesis. Glycosyltransferase required for the biosynthesis of heparan-sulfate and responsible for the alternating addition of beta-1-4-linked glucuronic acid (GlcA) and alpha-1-4-linked N-acetylglucosamine (GlcNAc) units to nascent heparan sulfate chains. This is Exostosin-like 2 (EXTL2) from Homo sapiens (Human).